We begin with the raw amino-acid sequence, 1807 residues long: Vitellogenin-2 (1807 aa).

A signal peptide spans M1 to A16. Residues W24 to V819 enclose the Vitellogenin domain. C180 and C224 are disulfide-bonded. Positions S334–N402 are disordered. Residues V346–S397 are compositionally biased toward low complexity. Residues N354, N579, N635, N1181, N1304, N1373, and N1506 are each glycosylated (N-linked (GlcNAc...) asparagine). The region spanning Q1448–Q1636 is the VWFD domain. 2 cysteine pairs are disulfide-bonded: C1450-C1599 and C1472-C1635. 2 disordered regions span residues C1635–P1655 and N1684–N1723. An N-linked (GlcNAc...) asparagine glycan is attached at N1693. The segment covering K1700–E1714 has biased composition (polar residues).

It localises to the secreted. In terms of biological role, precursor of the egg-yolk proteins that are sources of nutrients during embryonic development. The chain is Vitellogenin-2 from Solenopsis invicta (Red imported fire ant).